A 631-amino-acid polypeptide reads, in one-letter code: Chaperone protein DnaK (631 aa).

Thr197 carries the post-translational modification Phosphothreonine; by autocatalysis. The segment at 599–631 (AQSDAGAAGSASEENTTSNEKVVDADFEDVEKK) is disordered. Residues 603–612 (AGAAGSASEE) show a composition bias toward low complexity.

It belongs to the heat shock protein 70 family.

Acts as a chaperone. This Rickettsia bellii (strain RML369-C) protein is Chaperone protein DnaK.